Reading from the N-terminus, the 100-residue chain is uncharacterized protein (100 aa).

A helical membrane pass occupies residues I62–Y82.

It localises to the membrane. This is an uncharacterized protein from Dictyostelium discoideum (Social amoeba).